The sequence spans 196 residues: Cyclin-dependent kinase inhibitor 6 (196 aa).

2 disordered regions span residues 1-36 (MSER…PDSH) and 55-151 (ASDE…RKTP). Residues 124–139 (SEGLGETTTEMESSSA) show a composition bias toward low complexity. The residue at position 152 (Thr152) is a Phosphothreonine; by KIN10.

Belongs to the CDI family. ICK/KRP subfamily. In terms of assembly, specifically interacts with CDKA-1, but not with CDKB1-1. Interacts with CYCD1-1, CYCD4-1 and RHF1A. Binds to FBL17. Interacts with KIN10. Interacts with CYCD3-1. In terms of processing, ubiquitinated by RHF1A and SCF(FBL17). Ubiquitination leads to its subsequent degradation, thus controlling cell cycle progression. Post-translationally, the phosphorylation at Thr-152 by KIN10 represses its activity. Expressed in newly formed organs such as the shoot apex. Expressed in cotyledon, primary root and marginal region of the leaves as well as in developing pollen.

The protein localises to the nucleus. Its subcellular location is the nucleoplasm. Down-regulated by KIN10 under a phosphorylation-dependent manner. In terms of biological role, binds and inhibits CYCD2-1/CDKA-1 complex kinase activity. Regulates cell division which is crucial for plant growth, development and morphogenesis. May inhibit CDK kinases specifically involved in the G1/S phase transition. This is Cyclin-dependent kinase inhibitor 6 (KRP6) from Arabidopsis thaliana (Mouse-ear cress).